We begin with the raw amino-acid sequence, 687 residues long: Polyphosphate kinase (687 aa).

Asn45 serves as a coordination point for ATP. Residues Arg375 and Arg405 each coordinate Mg(2+). The Phosphohistidine intermediate role is filled by His435. ATP is bound by residues Tyr472, Arg568, and His596.

Belongs to the polyphosphate kinase 1 (PPK1) family. It depends on Mg(2+) as a cofactor. An intermediate of this reaction is the autophosphorylated ppk in which a phosphate is covalently linked to a histidine residue through a N-P bond.

The enzyme catalyses [phosphate](n) + ATP = [phosphate](n+1) + ADP. Catalyzes the reversible transfer of the terminal phosphate of ATP to form a long-chain polyphosphate (polyP). The chain is Polyphosphate kinase from Burkholderia cenocepacia (strain HI2424).